The following is a 298-amino-acid chain: ATP synthase gamma chain (298 aa).

Belongs to the ATPase gamma chain family. As to quaternary structure, F-type ATPases have 2 components, CF(1) - the catalytic core - and CF(0) - the membrane proton channel. CF(1) has five subunits: alpha(3), beta(3), gamma(1), delta(1), epsilon(1). CF(0) has three main subunits: a, b and c.

It localises to the cell inner membrane. Produces ATP from ADP in the presence of a proton gradient across the membrane. The gamma chain is believed to be important in regulating ATPase activity and the flow of protons through the CF(0) complex. The protein is ATP synthase gamma chain of Acidithiobacillus ferridurans.